The chain runs to 288 residues: Polyamine aminopropyltransferase (288 aa).

The PABS domain maps to 9–238; sequence ETLHDQFGQY…GIMTFAWATD (230 aa). Gln-33 provides a ligand contact to S-methyl-5'-thioadenosine. Spermidine contacts are provided by His-64 and Asp-88. S-methyl-5'-thioadenosine is bound by residues Glu-108 and 140–141; that span reads DG. Residue Asp-158 is the Proton acceptor of the active site. Residue 158-161 participates in spermidine binding; the sequence is DCTD. An S-methyl-5'-thioadenosine-binding site is contributed by Pro-165.

This sequence belongs to the spermidine/spermine synthase family. As to quaternary structure, homodimer or homotetramer.

It localises to the cytoplasm. The enzyme catalyses S-adenosyl 3-(methylsulfanyl)propylamine + putrescine = S-methyl-5'-thioadenosine + spermidine + H(+). It participates in amine and polyamine biosynthesis; spermidine biosynthesis; spermidine from putrescine: step 1/1. Catalyzes the irreversible transfer of a propylamine group from the amino donor S-adenosylmethioninamine (decarboxy-AdoMet) to putrescine (1,4-diaminobutane) to yield spermidine. This Escherichia coli (strain UTI89 / UPEC) protein is Polyamine aminopropyltransferase.